A 160-amino-acid polypeptide reads, in one-letter code: Large ribosomal subunit protein bL9 (160 aa).

The protein belongs to the bacterial ribosomal protein bL9 family.

Its function is as follows. Binds to the 23S rRNA. The sequence is that of Large ribosomal subunit protein bL9 from Neorickettsia sennetsu (strain ATCC VR-367 / Miyayama) (Ehrlichia sennetsu).